The following is a 310-amino-acid chain: uncharacterized protein (310 aa).

The disordered stretch occupies residues 1-70; the sequence is MAGNSQRRGA…ARGRTDETET (70 aa). Over residues 49-62 the composition is skewed to basic residues; that stretch reads AAKRAKAQQRRPAR. The S-adenosyl-L-methionine site is built by G262, V282, and L291.

Belongs to the class IV-like SAM-binding methyltransferase superfamily. RNA methyltransferase TrmH family.

This is an uncharacterized protein from Mycobacterium marinum (strain ATCC BAA-535 / M).